We begin with the raw amino-acid sequence, 241 residues long: Proteasome subunit beta type-1 (241 aa).

Residue M1 is modified to N-acetylmethionine. Positions 1-28 (MLSSVAAYSGAGRDLAMEPHSSVGPLQL) are excised as a propeptide. An O-linked (GlcNAc) serine glycan is attached at S58. A phosphoserine mark is found at S62 and S68. Y150 carries the phosphotyrosine modification. S162 carries the post-translational modification Phosphoserine. K204 is modified (N6-acetyllysine). S209 carries an O-linked (GlcNAc) serine glycan.

The protein belongs to the peptidase T1B family. In terms of assembly, the 26S proteasome consists of a 20S proteasome core and two 19S regulatory subunits. The 20S proteasome core is a barrel-shaped complex made of 28 subunits that are arranged in four stacked rings. The two outer rings are each formed by seven alpha subunits, and the two inner rings are formed by seven beta subunits. The proteolytic activity is exerted by three beta-subunits PSMB5, PSMB6 and PSMB7. Interacts with SERPINB2. Interacts with RFPL4A.

The protein resides in the cytoplasm. It localises to the nucleus. Its function is as follows. Non-catalytic component of the 20S core proteasome complex involved in the proteolytic degradation of most intracellular proteins. This complex plays numerous essential roles within the cell by associating with different regulatory particles. Associated with two 19S regulatory particles, forms the 26S proteasome and thus participates in the ATP-dependent degradation of ubiquitinated proteins. The 26S proteasome plays a key role in the maintenance of protein homeostasis by removing misfolded or damaged proteins that could impair cellular functions, and by removing proteins whose functions are no longer required. Associated with the PA200 or PA28, the 20S proteasome mediates ubiquitin-independent protein degradation. This type of proteolysis is required in several pathways including spermatogenesis (20S-PA200 complex) or generation of a subset of MHC class I-presented antigenic peptides (20S-PA28 complex). The sequence is that of Proteasome subunit beta type-1 (PSMB1) from Bos taurus (Bovine).